Here is a 315-residue protein sequence, read N- to C-terminus: Acetyl-coenzyme A carboxylase carboxyl transferase subunit alpha (315 aa).

The CoA carboxyltransferase C-terminal domain occupies 39 to 292; sequence LEDKSAKLLR…GDALEQELNG (254 aa).

The protein belongs to the AccA family. In terms of assembly, acetyl-CoA carboxylase is a heterohexamer composed of biotin carboxyl carrier protein (AccB), biotin carboxylase (AccC) and two subunits each of ACCase subunit alpha (AccA) and ACCase subunit beta (AccD).

Its subcellular location is the cytoplasm. The catalysed reaction is N(6)-carboxybiotinyl-L-lysyl-[protein] + acetyl-CoA = N(6)-biotinyl-L-lysyl-[protein] + malonyl-CoA. It functions in the pathway lipid metabolism; malonyl-CoA biosynthesis; malonyl-CoA from acetyl-CoA: step 1/1. Component of the acetyl coenzyme A carboxylase (ACC) complex. First, biotin carboxylase catalyzes the carboxylation of biotin on its carrier protein (BCCP) and then the CO(2) group is transferred by the carboxyltransferase to acetyl-CoA to form malonyl-CoA. The polypeptide is Acetyl-coenzyme A carboxylase carboxyl transferase subunit alpha (Sphingopyxis alaskensis (strain DSM 13593 / LMG 18877 / RB2256) (Sphingomonas alaskensis)).